Reading from the N-terminus, the 288-residue chain is Probable chromosome 1-partitioning protein ParB (288 aa).

The protein belongs to the ParB family.

Functionally, involved in chromosome partition. Localize to both poles of the predivisional cell following completion of DNA replication. Binds to the DNA origin of replication. The protein is Probable chromosome 1-partitioning protein ParB (parB1) of Deinococcus radiodurans (strain ATCC 13939 / DSM 20539 / JCM 16871 / CCUG 27074 / LMG 4051 / NBRC 15346 / NCIMB 9279 / VKM B-1422 / R1).